We begin with the raw amino-acid sequence, 99 residues long: UPF0213 protein SP_1535 (99 aa).

The GIY-YIG domain maps to 3 to 78; the sequence is HKAYMYVLEC…KRKKRPQKEE (76 aa).

The protein belongs to the UPF0213 family.

The sequence is that of UPF0213 protein SP_1535 from Streptococcus pneumoniae serotype 4 (strain ATCC BAA-334 / TIGR4).